Reading from the N-terminus, the 251-residue chain is Fibroblast growth factor 23 (251 aa).

The signal sequence occupies residues 1-24; the sequence is MLGARLRLWVCALCSVCSMSVLRA. A disulfide bridge links cysteine 95 with cysteine 113. O-linked (GalNAc) threonine glycosylation is found at threonine 171 and threonine 178. The tract at residues 172 to 221 is disordered; it reads PIPRRHTRSAEDDSERDPLNVLKPRARMTPAPASCSQELPSAEDNSPMAS. Residue serine 180 is modified to Phosphoserine; by FAM20C. Residues 205-219 show a composition bias toward polar residues; the sequence is SCSQELPSAEDNSPM.

The protein belongs to the heparin-binding growth factors family. In terms of assembly, interacts with FGFR1, FGFR2, FGFR3 and FGFR4. Affinity between fibroblast growth factors (FGFs) and their receptors is increased by KL and heparan sulfate glycosaminoglycans that function as coreceptors. In terms of processing, following secretion this protein is inactivated by cleavage into a N-terminal fragment and a C-terminal fragment. The processing is effected by proprotein convertases. O-glycosylated at Thr-171 and Thr-178 by GALNT3 and glycosylation of Thr-178 requires previous glycosylation at Thr171. Glycosylation is necessary for secretion; it blocks processing by proprotein convertases when the O-glycan is alpha 2,6-sialylated. Competition between proprotein convertase cleavage and block of cleavage by O-glycosylation determines the level of secreted active FGF23. Post-translationally, phosphorylation at Ser-180 mediated by FAM20C slows down glycosylation at Thr-178 notably. Expressed in osteogenic cells particularly during phases of active bone remodeling. In adult trabecular bone, expressed in osteocytes and flattened bone-lining cells (inactive osteoblasts).

The protein resides in the secreted. In terms of biological role, regulator of phosphate homeostasis. Inhibits renal tubular phosphate transport by reducing SLC34A1 levels. Up-regulates EGR1 expression in the presence of KL. Acts directly on the parathyroid to decrease PTH secretion. Regulator of vitamin-D metabolism. Negatively regulates osteoblast differentiation and matrix mineralization. In Homo sapiens (Human), this protein is Fibroblast growth factor 23 (FGF23).